We begin with the raw amino-acid sequence, 69 residues long: Toxin CSTX-11 (69 aa).

4 disulfides stabilise this stretch: C6–C21, C13–C30, C20–C47, and C32–C45.

Expressed by the venom gland.

It is found in the secreted. The protein localises to the target cell membrane. Spider venom toxin that shows calcium channel blocking activity and exhibits cytolytic activity by affecting the outer leaflet curvature and/or pore formation across the membrane. It blocks L-type calcium channels (Cav1/CACNA1) in mammalian neurons at nanomolar concentrations. Furthermore, it produces a slow voltage-independent block of mid/low and high voltage-activated calcium channels in cockroach neurons. Potassium ions, histamine, M-ctenitoxin-Cs1a (AC P83619), CSTX-9 (AC P58604), and CSTX-13 (AC P83919) synergistically increase the insecticidal activity of this toxin. In vivo, it causes paralysis in blow flies and provokes death in drosophila. In Cupiennius salei (American wandering spider), this protein is Toxin CSTX-11.